A 446-amino-acid polypeptide reads, in one-letter code: Baeyer-Villiger oxidase mdpL (446 aa).

This sequence belongs to the AflY oxidoreductase family. It depends on NADPH as a cofactor.

Its pathway is secondary metabolite biosynthesis. In terms of biological role, baeyer-Villiger oxidase; part of the gene cluster that mediates the biosynthesis of monodictyphenone, a prenyl xanthone derivative. The pathway begins with the synthesis of atrochrysone thioester by the polyketide synthase (PKS) mdpG. The atrochrysone carboxyl ACP thioesterase mdpF then breaks the thioester bond and releases the atrochrysone carboxylic acid from mdpG. The atrochrysone carboxylic acid is then converted to atrochrysone which is further transformed into emodin anthrone. The next step is performed by the anthrone oxygenase mdpH that catalyzes the oxidation of emodinanthrone to emodin. Emodin is further modified to yield monodictyphenone via several steps involving mdpB, mdpC mdpJ, mdpK and mdpL. These enzymes with xptA, xptB and xptC are also proposed to be involved in the synthesis of shamixanthone from emodin. Especially, direct reduction of emodin by the short chain dehydrogenase mdpC followed by dehydration catalyzed by the scytalone dehydratase-like protein mdpB gives loss of oxygen and formation of chrysophanol intermediate in two simple steps. In Emericella nidulans (strain FGSC A4 / ATCC 38163 / CBS 112.46 / NRRL 194 / M139) (Aspergillus nidulans), this protein is Baeyer-Villiger oxidase mdpL.